Here is a 346-residue protein sequence, read N- to C-terminus: Protein MelA (346 aa).

VOC domains lie at 12 to 141 (GIEF…DFEA) and 155 to 305 (EVDH…IFTK). Residues histidine 158, histidine 237, and glutamate 314 each coordinate Fe cation.

The protein belongs to the 4HPPD family. Fe cation is required as a cofactor.

The protein localises to the cytoplasm. It participates in pigment biosynthesis; melanin biosynthesis. In Shewanella colwelliana (Alteromonas colwelliana), this protein is Protein MelA (melA).